The primary structure comprises 112 residues: UPF0212 protein Mhun_0078 (112 aa).

The protein belongs to the UPF0212 family.

The protein is UPF0212 protein Mhun_0078 of Methanospirillum hungatei JF-1 (strain ATCC 27890 / DSM 864 / NBRC 100397 / JF-1).